The following is a 608-amino-acid chain: Elongation factor 4 (608 aa).

The region spanning Asp11–Ser193 is the tr-type G domain. Residues Asp23–Thr28 and Asn140–Asp143 contribute to the GTP site.

Belongs to the TRAFAC class translation factor GTPase superfamily. Classic translation factor GTPase family. LepA subfamily.

The protein resides in the cell membrane. The enzyme catalyses GTP + H2O = GDP + phosphate + H(+). In terms of biological role, required for accurate and efficient protein synthesis under certain stress conditions. May act as a fidelity factor of the translation reaction, by catalyzing a one-codon backward translocation of tRNAs on improperly translocated ribosomes. Back-translocation proceeds from a post-translocation (POST) complex to a pre-translocation (PRE) complex, thus giving elongation factor G a second chance to translocate the tRNAs correctly. Binds to ribosomes in a GTP-dependent manner. This Anoxybacillus flavithermus (strain DSM 21510 / WK1) protein is Elongation factor 4.